We begin with the raw amino-acid sequence, 167 residues long: Peptidyl-prolyl cis-trans isomerase-like 3 (167 aa).

The 160-residue stretch at 1–160 (MSVTLHTSHG…EPVRIENVTI (160 aa)) folds into the PPIase cyclophilin-type domain.

The protein belongs to the cyclophilin-type PPIase family. PPIL3 subfamily.

It catalyses the reaction [protein]-peptidylproline (omega=180) = [protein]-peptidylproline (omega=0). In terms of biological role, PPIases accelerate the folding of proteins. It catalyzes the cis-trans isomerization of proline imidic peptide bonds in oligopeptides. The protein is Peptidyl-prolyl cis-trans isomerase-like 3 (CYP10) of Gibberella zeae (strain ATCC MYA-4620 / CBS 123657 / FGSC 9075 / NRRL 31084 / PH-1) (Wheat head blight fungus).